The primary structure comprises 179 residues: Tetratricopeptide repeat protein 36 (179 aa).

3 TPR repeats span residues 43–76, 78–110, and 115–148; these read SLQL…CPKN, SAYN…AGPK, and CQAY…GSSF.

Belongs to the TTC36 family.

In Caenorhabditis elegans, this protein is Tetratricopeptide repeat protein 36.